Consider the following 129-residue polypeptide: Ribonuclease VapC12 (129 aa).

2 residues coordinate Mg(2+): aspartate 5 and aspartate 94.

It belongs to the PINc/VapC protein family. The cofactor is Mg(2+).

Toxic component of a type II toxin-antitoxin (TA) system. An RNase. The cognate antitoxin is VapB12. The protein is Ribonuclease VapC12 of Mycobacterium tuberculosis (strain CDC 1551 / Oshkosh).